Reading from the N-terminus, the 207-residue chain is Mediator of RNA polymerase II transcription subunit 21 (207 aa).

Positions 37-121 (PHPDVPDAAP…PDSPRTFASR (85 aa)) are disordered. Over residues 65–80 (PVPAQSQASPPAQNPA) the composition is skewed to low complexity. The segment covering 84–96 (AGAGTSVGEGGQT) has biased composition (gly residues). Residues 97-108 (PGPAAGAGADPN) show a composition bias toward low complexity. Residues 146–196 (IDSSEAEQEKRIRELEGELRRVEEERELKMRELKRLRRTLENVLRAVETGL) adopt a coiled-coil conformation.

The protein belongs to the Mediator complex subunit 21 family. As to quaternary structure, component of the Mediator complex.

Its subcellular location is the nucleus. In terms of biological role, component of the Mediator complex, a coactivator involved in the regulated transcription of nearly all RNA polymerase II-dependent genes. Mediator functions as a bridge to convey information from gene-specific regulatory proteins to the basal RNA polymerase II transcription machinery. Mediator is recruited to promoters by direct interactions with regulatory proteins and serves as a scaffold for the assembly of a functional preinitiation complex with RNA polymerase II and the general transcription factors. In Neosartorya fischeri (strain ATCC 1020 / DSM 3700 / CBS 544.65 / FGSC A1164 / JCM 1740 / NRRL 181 / WB 181) (Aspergillus fischerianus), this protein is Mediator of RNA polymerase II transcription subunit 21 (srb7).